Reading from the N-terminus, the 392-residue chain is Succinate--CoA ligase [ADP-forming] subunit beta (392 aa).

Positions 9 to 248 constitute an ATP-grasp domain; the sequence is KGILKQFGVA…ITEEDPLEYE (240 aa). ATP is bound by residues Lys-50, 57-59, Glu-103, Met-106, and Glu-111; that span reads GRG. Mg(2+) is bound by residues Asn-203 and Asp-217. Residues Asn-268 and 325–327 contribute to the substrate site; that span reads GIV.

The protein belongs to the succinate/malate CoA ligase beta subunit family. In terms of assembly, heterotetramer of two alpha and two beta subunits. It depends on Mg(2+) as a cofactor.

It carries out the reaction succinate + ATP + CoA = succinyl-CoA + ADP + phosphate. The catalysed reaction is GTP + succinate + CoA = succinyl-CoA + GDP + phosphate. It participates in carbohydrate metabolism; tricarboxylic acid cycle; succinate from succinyl-CoA (ligase route): step 1/1. Succinyl-CoA synthetase functions in the citric acid cycle (TCA), coupling the hydrolysis of succinyl-CoA to the synthesis of either ATP or GTP and thus represents the only step of substrate-level phosphorylation in the TCA. The beta subunit provides nucleotide specificity of the enzyme and binds the substrate succinate, while the binding sites for coenzyme A and phosphate are found in the alpha subunit. The protein is Succinate--CoA ligase [ADP-forming] subunit beta of Chlorobaculum parvum (strain DSM 263 / NCIMB 8327) (Chlorobium vibrioforme subsp. thiosulfatophilum).